Consider the following 448-residue polypeptide: Enolase (448 aa).

Q164 contributes to the (2R)-2-phosphoglycerate binding site. Catalysis depends on E206, which acts as the Proton donor. Residues D243, E289, and D316 each contribute to the Mg(2+) site. (2R)-2-phosphoglycerate is bound by residues K341, R370, S371, and K392. Residue K341 is the Proton acceptor of the active site.

This sequence belongs to the enolase family. It depends on Mg(2+) as a cofactor.

The protein resides in the cytoplasm. Its subcellular location is the secreted. It is found in the cell surface. It catalyses the reaction (2R)-2-phosphoglycerate = phosphoenolpyruvate + H2O. It participates in carbohydrate degradation; glycolysis; pyruvate from D-glyceraldehyde 3-phosphate: step 4/5. Catalyzes the reversible conversion of 2-phosphoglycerate (2-PG) into phosphoenolpyruvate (PEP). It is essential for the degradation of carbohydrates via glycolysis. This Oenococcus oeni (strain ATCC BAA-331 / PSU-1) protein is Enolase.